The chain runs to 2647 residues: Filamin-A (2647 aa).

The span at 1 to 15 (MSSSHSRAGQSAAGA) shows a compositional bias: low complexity. Residues 1–39 (MSSSHSRAGQSAAGAAPGGGVDTRDAEMPATEKDLAEDA) form a disordered region. Position 2 is an N-acetylserine (serine 2). The actin-binding stretch occupies residues 2–274 (SSSHSRAGQS…PKAKLKPGAP (273 aa)). Serine 11 carries the post-translational modification Phosphoserine. A compositionally biased stretch (basic and acidic residues) spans 22-39 (DTRDAEMPATEKDLAEDA). Glycyl lysine isopeptide (Lys-Gly) (interchain with G-Cter in ubiquitin) cross-links involve residues lysine 42, lysine 43, and lysine 135. Calponin-homology (CH) domains are found at residues 43 to 149 (KIQQ…LHYS) and 166 to 269 (QTPK…KAKL). Residues 271–294 (PGAPLRPKLNPKKARAYGPGIEPT) are disordered. Filamin repeat units follow at residues 276–374 (RPKL…EVYV), 376–474 (KSQG…TVTV), 475–570 (GQAC…EVKV), 571–663 (GTEC…MADI), 667–763 (PQDF…RVNV), 764–866 (GAGS…RVKV), 867–965 (EPSH…SVAV), 966–1061 (SPSL…PLEA), 1062–1154 (VAPT…KAHV), 1155–1249 (VPCF…KLQV), 1250–1349 (EPAV…QVPV), 1350–1442 (TEGC…KVPV), 1443–1539 (HDVT…KVKV), 1540–1636 (LPTH…RVRA), and 1649–1740 (VSIG…QVTA). Lysine 299 participates in a covalent cross-link: Glycyl lysine isopeptide (Lys-Gly) (interchain with G-Cter in SUMO1); alternate. A Glycyl lysine isopeptide (Lys-Gly) (interchain with G-Cter in SUMO2); alternate cross-link involves residue lysine 299. An N6-acetyllysine mark is found at lysine 376 and lysine 508. Residues lysine 700, lysine 781, lysine 837, lysine 865, and lysine 906 each carry the N6-acetyllysine modification. Serine 968 and serine 1055 each carry phosphoserine. Lysine 1071 carries the post-translational modification N6-acetyllysine; alternate. Lysine 1071 carries the N6-succinyllysine; alternate modification. Serine 1081 and serine 1084 each carry phosphoserine. Threonine 1089 is subject to Phosphothreonine. Serine 1301 and serine 1338 each carry phosphoserine. Residues 1361–1382 (HGPGIQSGTTNKPNKFTVETRG) are disordered. Lysine 1372 carries the post-translational modification N6-acetyllysine. A phosphoserine mark is found at serine 1459 and serine 1533. Residues 1490-1607 (PKGLVEPVDV…DNHDGTYTVA (118 aa)) form an interaction with furin region. An N6-acetyllysine modification is found at lysine 1538. Serine 1630 and serine 1734 each carry phosphoserine. Residues 1741 to 1778 (LAGDQPSVQPPLRSQQLAPQYTYAQGGQQTWAPERPLV) are hinge 1. Filamin repeat units lie at residues 1779–1860 (GVNG…QFYV), 1861–1950 (DYVN…PFTA), 1951–2039 (RVTG…PVVI), 2042–2131 (SEIG…SPFS), 2132–2230 (VKVT…QFTV), 2233–2325 (LGEG…VVPV), 2327–2420 (SPSG…KIRV), and 2424–2516 (GHGG…KAKV). Position 1835 is a phosphoserine (serine 1835). Serine 1967, serine 2053, serine 2128, serine 2152, serine 2158, serine 2163, serine 2180, serine 2284, serine 2327, and serine 2329 each carry phosphoserine. At threonine 2336 the chain carries Phosphothreonine. Phosphoserine is present on residues serine 2338, serine 2370, serine 2414, serine 2510, serine 2523, and serine 2526. A hinge 2 region spans residues 2517–2551 (TGPRLVSNHSLHETSSVFVDSLTKATCAPQHGAPG). A self-association site, tail region spans residues 2517–2647 (TGPRLVSNHS…PGSPYRVVVP (131 aa)). Residues 2552 to 2646 (PGPADASKVV…IPGSPYRVVV (95 aa)) form a Filamin 24 repeat. Lysine 2569 carries the post-translational modification N6-acetyllysine; alternate. Residue lysine 2569 is modified to N6-succinyllysine; alternate. Lysine 2575 is modified (N6-acetyllysine). Threonine 2599 carries the phosphothreonine modification. An N6-acetyllysine mark is found at lysine 2607 and lysine 2621.

Belongs to the filamin family. In terms of assembly, homodimer. Interacts with PDLIM2. Interacts with RFLNA and RFLNB. Interacts with FCGR1A, FLNB, FURIN, HSPB7, INPPL1, KCND2, MYOT, MYOZ1, ARHGAP24, PSEN1, PSEN2 and ECSCR. Also interacts with various other binding partners in addition to filamentous actin. Interacts (via N-terminus) with MIS18BP1 (via N-terminus). Interacts (via N-terminus) with TAF1B. Interacts with TMEM67 (via C-terminus) and MKS1. Interacts (via actin-binding domain) with MICALL2 (via CH domain). Interacts (via filamin repeat 5) with SYK; docks SYK to the plasma membrane. Interacts (via filamin repeats 19 and 21) with DRD3; increased PKA-mediated phosphorylation at Ser-2152. Interacts (via filamin repeat 21) with MAS1, AGTR1 and ADRA1D; increases PKA-mediated phosphorylation of FLNA at Ser-2152. Interacts (via filamin repeats 4, 9, 12, 17, 19, 21, and 23) with GP1BA (high affinity), ITGB7, ITGB2 and FBLIM1. Interacts with CEACAM1 (via cytoplasmic domain); inhibits cell migration and cell scattering by interfering with the interaction between FLNA and RALA. Interacts with FOXC1. Interacts (via calponin-homology (CH) domain 1 and filamin repeat 24) with CRMP1; the interaction alters FLNA ternary structure and thus promotes FLNA dissociation from F-actin. Interacts with DPYSL3/CRMP3 and DPYSL4/CRMP4. Interacts with integrin ITGB1 isoform 1/beta-1A and isoform 5/beta-1D. Interacts with LUZP1; the interaction is not necessary for colocalization of LUZP1 with F-actin. Phosphorylation at Ser-2152 is negatively regulated by the autoinhibited conformation of filamin repeats 19-21. Ligand binding induces a conformational switch triggering phosphorylation at Ser-2152 by PKA. In terms of processing, phosphorylation extent changes in response to cell activation. Post-translationally, polyubiquitination in the CH1 domain by a SCF-like complex containing ASB2 leads to proteasomal degradation. Prior dissociation from actin may be required to expose the target lysines. Ubiquitinated in endothelial cells by RNF213 downstream of the non-canonical Wnt signaling pathway, leading to its degradation by the proteasome. Ubiquitous.

It is found in the cytoplasm. Its subcellular location is the cell cortex. The protein resides in the cytoskeleton. It localises to the perikaryon. The protein localises to the cell projection. It is found in the growth cone. Its subcellular location is the podosome. Functionally, promotes orthogonal branching of actin filaments and links actin filaments to membrane glycoproteins. Anchors various transmembrane proteins to the actin cytoskeleton and serves as a scaffold for a wide range of cytoplasmic signaling proteins. Interaction with FLNB may allow neuroblast migration from the ventricular zone into the cortical plate. Tethers cell surface-localized furin, modulates its rate of internalization and directs its intracellular trafficking. Involved in ciliogenesis. Plays a role in cell-cell contacts and adherens junctions during the development of blood vessels, heart and brain organs. Plays a role in platelets morphology through interaction with SYK that regulates ITAM- and ITAM-like-containing receptor signaling, resulting in by platelet cytoskeleton organization maintenance. During the axon guidance process, required for growth cone collapse induced by SEMA3A-mediated stimulation of neurons. The chain is Filamin-A (FLNA) from Homo sapiens (Human).